The sequence spans 136 residues: Large ribosomal subunit protein uL16 (136 aa).

It belongs to the universal ribosomal protein uL16 family. Part of the 50S ribosomal subunit.

Its function is as follows. Binds 23S rRNA and is also seen to make contacts with the A and possibly P site tRNAs. In Rickettsia africae (strain ESF-5), this protein is Large ribosomal subunit protein uL16.